The primary structure comprises 594 residues: Sodium-dependent glucose transporter 1 (594 aa).

Transmembrane regions (helical) follow at residues 77–97, 115–137, 144–161, 166–186, 205–225, 269–289, 311–331, 349–371, 393–413, 439–459, and 467–487; these read WLVS…ISVL, LSYI…GILF, LLLG…SGTP, AWVL…LDTG, ALHF…KLLF, IVIG…YFCI, TLII…VAYG, AAGL…IFFA, LLCL…LYGI, IFVV…GFLL, and LLMY…PVLY.

The protein belongs to the major facilitator superfamily.

It is found in the apical cell membrane. Functionally, may function as a sodium-dependent glucose transporter. Potential channels for urea in the inner medulla of kidney. The chain is Sodium-dependent glucose transporter 1 (mfsd4b) from Danio rerio (Zebrafish).